A 114-amino-acid chain; its full sequence is Circadian clock oscillator protein KaiB (114 aa).

It belongs to the KaiB family. As to quaternary structure, may undergo a major conformational rearrangment; in the free state forms homooligomers. When bound to KaiC switches to a monomeric thioredoxin-fold (KaiB(fs)). The active oscillator complex is probably KaiC(6):KaiB(6).

Its function is as follows. Component of the KaiBC clock protein complex, which constitutes the main circadian regulator in cyanobacteria; it may modify the ATPase activity of KaiC. Functionally, may be a metamorphic protein which reversibly switches between an inactive tetrameric fold and a rare, thioredoxin-like monomeric fold (KaiB(fs)). KaiB(fs) binds phospho-KaiC, and perhaps clock output effectors. This chain is Circadian clock oscillator protein KaiB, found in Prochlorococcus marinus (strain MIT 9211).